The sequence spans 528 residues: Peptide chain release factor 3 (528 aa).

Residues 10–279 (AKRRTFAIIS…GLVEWAPAPM (270 aa)) form the tr-type G domain. GTP is bound by residues 19 to 26 (SHPDAGKT), 87 to 91 (DTPGH), and 141 to 144 (NKLD).

This sequence belongs to the TRAFAC class translation factor GTPase superfamily. Classic translation factor GTPase family. PrfC subfamily.

It localises to the cytoplasm. Functionally, increases the formation of ribosomal termination complexes and stimulates activities of RF-1 and RF-2. It binds guanine nucleotides and has strong preference for UGA stop codons. It may interact directly with the ribosome. The stimulation of RF-1 and RF-2 is significantly reduced by GTP and GDP, but not by GMP. This is Peptide chain release factor 3 from Escherichia coli O1:K1 / APEC.